We begin with the raw amino-acid sequence, 429 residues long: Enolase (429 aa).

Residue glutamine 162 coordinates (2R)-2-phosphoglycerate. Glutamate 204 serves as the catalytic Proton donor. Mg(2+) is bound by residues aspartate 241, glutamate 286, and aspartate 313. Residues lysine 338, arginine 367, serine 368, and lysine 389 each contribute to the (2R)-2-phosphoglycerate site. Lysine 338 acts as the Proton acceptor in catalysis.

Belongs to the enolase family. Mg(2+) serves as cofactor.

The protein localises to the cytoplasm. It localises to the secreted. Its subcellular location is the cell surface. It catalyses the reaction (2R)-2-phosphoglycerate = phosphoenolpyruvate + H2O. It functions in the pathway carbohydrate degradation; glycolysis; pyruvate from D-glyceraldehyde 3-phosphate: step 4/5. Functionally, catalyzes the reversible conversion of 2-phosphoglycerate (2-PG) into phosphoenolpyruvate (PEP). It is essential for the degradation of carbohydrates via glycolysis. The chain is Enolase from Shouchella clausii (strain KSM-K16) (Alkalihalobacillus clausii).